A 176-amino-acid polypeptide reads, in one-letter code: Small ribosomal subunit protein uS5 (176 aa).

One can recognise an S5 DRBM domain in the interval 11–74; that stretch reads LSEVLVDVNR…QAAKKRMMKV (64 aa).

It belongs to the universal ribosomal protein uS5 family. In terms of assembly, part of the 30S ribosomal subunit. Contacts proteins S4 and S8.

In terms of biological role, with S4 and S12 plays an important role in translational accuracy. Its function is as follows. Located at the back of the 30S subunit body where it stabilizes the conformation of the head with respect to the body. This Rickettsia africae (strain ESF-5) protein is Small ribosomal subunit protein uS5.